The chain runs to 96 residues: Co-chaperonin GroES (96 aa).

It belongs to the GroES chaperonin family. As to quaternary structure, heptamer of 7 subunits arranged in a ring. Interacts with the chaperonin GroEL.

The protein resides in the cytoplasm. Its function is as follows. Together with the chaperonin GroEL, plays an essential role in assisting protein folding. The GroEL-GroES system forms a nano-cage that allows encapsulation of the non-native substrate proteins and provides a physical environment optimized to promote and accelerate protein folding. GroES binds to the apical surface of the GroEL ring, thereby capping the opening of the GroEL channel. The sequence is that of Co-chaperonin GroES from Nitrosospira multiformis (strain ATCC 25196 / NCIMB 11849 / C 71).